The following is an 865-amino-acid chain: ABC transporter ATP-binding/permease protein Rv1747 (865 aa).

The 50-residue stretch at valine 29–valine 78 folds into the FHA 1 domain. A disordered region spans residues glycine 104–alanine 205. Residues proline 135–proline 156 are compositionally biased toward low complexity. The residue at position 152 (threonine 152) is a Phosphothreonine. A compositionally biased stretch (pro residues) spans alanine 157–arginine 166. Phosphothreonine is present on threonine 210. The FHA 2 domain occupies valine 230–valine 279. Residues leucine 319 to isoleucine 552 form the ABC transporter domain. ATP is bound at residue glycine 352–serine 359. Residues arginine 596–serine 810 enclose the ABC transmembrane type-2 domain. Helical transmembrane passes span glycine 614–proline 634, proline 652–isoleucine 672, valine 700–valine 720, phenylalanine 740–isoleucine 760, isoleucine 767–proline 787, and serine 836–valine 856.

The protein in the central section; belongs to the ABC transporter superfamily. This sequence in the C-terminal section; belongs to the ABC-2 integral membrane protein family. As to quaternary structure, homodimer. Interacts with PknF. Phosphorylated by PknF. Can probably be phosphorylated in vivo by other kinases when PknF is missing.

The protein localises to the cell membrane. Its activity is regulated as follows. Function is positively regulated by phosphorylation. In terms of biological role, involved in the translocation of an unknown substrate across the membrane. Transmembrane domains (TMD) form a pore in the membrane and the ATP-binding domain (NBD) is responsible for energy generation. Required for virulence. The protein is ABC transporter ATP-binding/permease protein Rv1747 of Mycobacterium tuberculosis (strain ATCC 25618 / H37Rv).